The primary structure comprises 228 residues: uncharacterized protein (228 aa).

The next 4 helical transmembrane spans lie at 37–54 (WCMH…TLIV), 67–89 (VVSI…STGV), 104–126 (HIGI…TSRL), and 138–160 (VLHV…LVLY).

The protein localises to the cell membrane. This is an uncharacterized protein from Treponema pallidum (strain Nichols).